The following is a 241-amino-acid chain: Glutathione S-transferase omega-1 (241 aa).

Ser-2 bears the N-acetylserine mark. The GST N-terminal domain occupies 22–101 (GLIRVYSMRF…YLDEAYPGKK (80 aa)). The Nucleophile role is filled by Cys-32. Lys-57 is modified (N6-acetyllysine). Glutathione-binding positions include Lys-59, Val-72, and 85-86 (ES). Residues 106 to 225 (DPYEKACQKM…HIEPRDLRAF (120 aa)) form the GST C-terminal domain. Lys-143, Lys-148, and Lys-152 each carry N6-acetyllysine.

In terms of assembly, homodimer. Most abundant in the liver and skeletal muscle; also expressed in heart, diaphragm, colon, thymus, kidney, lung, ovaries, spleen, intestine and pancreas.

Its subcellular location is the cytoplasm. It is found in the cytosol. The catalysed reaction is RX + glutathione = an S-substituted glutathione + a halide anion + H(+). The enzyme catalyses L-dehydroascorbate + 2 glutathione = glutathione disulfide + L-ascorbate. It catalyses the reaction methylarsonate + 2 glutathione + H(+) = methylarsonous acid + glutathione disulfide + H2O. In terms of biological role, exhibits glutathione-dependent thiol transferase and dehydroascorbate reductase activities. Has S-(phenacyl)glutathione reductase activity. Also has glutathione S-transferase activity. Participates in the biotransformation of inorganic arsenic and reduces monomethylarsonic acid (MMA) and dimethylarsonic acid. The protein is Glutathione S-transferase omega-1 (GSTO1) of Sus scrofa (Pig).